The following is a 205-amino-acid chain: Nuclear transcription factor Y subunit C-6 (205 aa).

The disordered stretch occupies residues 1–24 (MEPKSTTPPPPPPPPVLGAPVPYP).

Belongs to the NFYC/HAP5 subunit family. Heterotrimeric transcription factor composed of three components, NF-YA, NF-YB and NF-YC. NF-YB and NF-YC must interact and dimerize for NF-YA association and DNA binding. Interacts with NFYB2. Interacts with NFYB8, NFYB10 and HD5/NFYB11.

It localises to the nucleus. It is found in the cytoplasm. In terms of biological role, component of the NF-Y/HAP transcription factor complex. The sequence is that of Nuclear transcription factor Y subunit C-6 from Oryza sativa subsp. japonica (Rice).